We begin with the raw amino-acid sequence, 685 residues long: ATP-dependent RNA helicase MSS116, mitochondrial (685 aa).

The transit peptide at 1-34 (MLVLQRIPKRALQFNGVTGTVCSTRLFHHAFNLN) directs the protein to the mitochondrion. Positions 42 to 107 (SEERRYRNSN…NNGSRRRYQD (66 aa)) are disordered. Residues 58–69 (SDSNSNNKYRNS) show a composition bias toward low complexity. A compositionally biased stretch (basic and acidic residues) spans 70 to 86 (SYDDNRSRSNYGGDKRN). Low complexity predominate over residues 88–99 (RNNNNYGNNRNN). Positions 138 to 166 (SLLEESLLDANVHKAISAMKFESLTPVQQ) match the Q motif motif. The region spanning 170–357 (KPILTTENDV…ATIMNKKDCL (188 aa)) is the Helicase ATP-binding domain. 183 to 190 (AKTGTGKT) serves as a coordination point for ATP. The DEAD box motif lies at 298-301 (DEAD). The 157-residue stretch at 386 to 542 (SMVALIQSIE…EDYLNQDKEN (157 aa)) folds into the Helicase C-terminal domain. The segment at 633–685 (DREFDDEDRYTSRSQNNYKSKQSSKSNRFEGRNDYSNSRRSHANQKRNFTFDD) is disordered. Positions 644-658 (SRSQNNYKSKQSSKS) are enriched in low complexity.

Belongs to the DEAD box helicase family. DDX18/HAS1 subfamily.

Its subcellular location is the mitochondrion matrix. It carries out the reaction ATP + H2O = ADP + phosphate + H(+). Its function is as follows. ATP-dependent RNA helicase required for mitochondrial splicing of group I and II introns. Also required for efficient mitochondrial translation. This chain is ATP-dependent RNA helicase MSS116, mitochondrial (MSS116), found in Kluyveromyces lactis (strain ATCC 8585 / CBS 2359 / DSM 70799 / NBRC 1267 / NRRL Y-1140 / WM37) (Yeast).